Reading from the N-terminus, the 127-residue chain is Small ribosomal subunit protein uS11 (127 aa).

The protein belongs to the universal ribosomal protein uS11 family. As to quaternary structure, part of the 30S ribosomal subunit. Interacts with proteins S7 and S18. Binds to IF-3.

In terms of biological role, located on the platform of the 30S subunit, it bridges several disparate RNA helices of the 16S rRNA. Forms part of the Shine-Dalgarno cleft in the 70S ribosome. The chain is Small ribosomal subunit protein uS11 from Prosthecochloris aestuarii (strain DSM 271 / SK 413).